A 229-amino-acid polypeptide reads, in one-letter code: Small ribosomal subunit protein uS3 (229 aa).

One can recognise a KH type-2 domain in the interval Val-17–Glu-85. The disordered stretch occupies residues Leu-202–Ala-229. A compositionally biased stretch (low complexity) spans Gly-219–Ala-229.

It belongs to the universal ribosomal protein uS3 family. In terms of assembly, part of the 30S ribosomal subunit.

Binds the lower part of the 30S subunit head. In Archaeoglobus fulgidus (strain ATCC 49558 / DSM 4304 / JCM 9628 / NBRC 100126 / VC-16), this protein is Small ribosomal subunit protein uS3.